The primary structure comprises 647 residues: DNA ligase (647 aa).

NAD(+) contacts are provided by residues 30 to 34 (DEEYD), 79 to 80 (SM), and E105. The N6-AMP-lysine intermediate role is filled by K107. NAD(+)-binding residues include R128, E162, and K301. The Zn(2+) site is built by C395, C398, C411, and C416. The 78-residue stretch at 570 to 647 (KSDGVIFGKT…ESAFNELVKE (78 aa)) folds into the BRCT domain.

Belongs to the NAD-dependent DNA ligase family. LigA subfamily. Mg(2+) is required as a cofactor. It depends on Mn(2+) as a cofactor.

It carries out the reaction NAD(+) + (deoxyribonucleotide)n-3'-hydroxyl + 5'-phospho-(deoxyribonucleotide)m = (deoxyribonucleotide)n+m + AMP + beta-nicotinamide D-nucleotide.. Functionally, DNA ligase that catalyzes the formation of phosphodiester linkages between 5'-phosphoryl and 3'-hydroxyl groups in double-stranded DNA using NAD as a coenzyme and as the energy source for the reaction. It is essential for DNA replication and repair of damaged DNA. The polypeptide is DNA ligase (Campylobacter jejuni subsp. jejuni serotype O:6 (strain 81116 / NCTC 11828)).